Reading from the N-terminus, the 245-residue chain is tRNA pseudouridine synthase A (245 aa).

The active-site Nucleophile is aspartate 52. Substrate is bound at residue tyrosine 111.

This sequence belongs to the tRNA pseudouridine synthase TruA family. Homodimer.

It catalyses the reaction uridine(38/39/40) in tRNA = pseudouridine(38/39/40) in tRNA. Functionally, formation of pseudouridine at positions 38, 39 and 40 in the anticodon stem and loop of transfer RNAs. The polypeptide is tRNA pseudouridine synthase A (Rickettsia felis (strain ATCC VR-1525 / URRWXCal2) (Rickettsia azadi)).